A 163-amino-acid polypeptide reads, in one-letter code: Steroid receptor-associated and regulated protein (163 aa).

Basic and acidic residues predominate over residues 1–16; the sequence is MAFSKDPRRTSLRDSS. Disordered stretches follow at residues 1 to 30 and 96 to 149; these read MAFSKDPRRTSLRDSSVEMSSGTQPSCAPK and ALDG…EKVK. The span at 17 to 26 shows a compositional bias: polar residues; the sequence is VEMSSGTQPS.

In terms of assembly, interacts with 14-3-3 proteins.

Its function is as follows. May regulate the transcriptional function of androgen and estrogen receptors. The sequence is that of Steroid receptor-associated and regulated protein from Mus musculus (Mouse).